A 174-amino-acid polypeptide reads, in one-letter code: MADKQIERTLIILKPDAVVRGLMGEIISRFEKRGLKIVGMKMIWIDRKLAEKHYAEHKGKPFFEPLIDYITKAPSVVMVVEGRYAISVVRKMAGATDPKDAEPGSIRGDYGLDVGDAIYNVIHASDSPESAEREINLYFKPEELFEYCKAADWFYHTHARSKKEYLDSMDCLER.

Residues lysine 14, phenylalanine 62, arginine 90, threonine 96, and arginine 107 each coordinate ATP. Histidine 123 functions as the Pros-phosphohistidine intermediate in the catalytic mechanism.

It belongs to the NDK family. Mg(2+) is required as a cofactor.

It is found in the cytoplasm. It carries out the reaction a 2'-deoxyribonucleoside 5'-diphosphate + ATP = a 2'-deoxyribonucleoside 5'-triphosphate + ADP. The catalysed reaction is a ribonucleoside 5'-diphosphate + ATP = a ribonucleoside 5'-triphosphate + ADP. In terms of biological role, major role in the synthesis of nucleoside triphosphates other than ATP. The ATP gamma phosphate is transferred to the NDP beta phosphate via a ping-pong mechanism, using a phosphorylated active-site intermediate. This is Nucleoside diphosphate kinase from Thermococcus kodakarensis (strain ATCC BAA-918 / JCM 12380 / KOD1) (Pyrococcus kodakaraensis (strain KOD1)).